Here is a 100-residue protein sequence, read N- to C-terminus: Aspartyl/glutamyl-tRNA(Asn/Gln) amidotransferase subunit C (100 aa).

The protein belongs to the GatC family. In terms of assembly, heterotrimer of A, B and C subunits.

The catalysed reaction is L-glutamyl-tRNA(Gln) + L-glutamine + ATP + H2O = L-glutaminyl-tRNA(Gln) + L-glutamate + ADP + phosphate + H(+). It carries out the reaction L-aspartyl-tRNA(Asn) + L-glutamine + ATP + H2O = L-asparaginyl-tRNA(Asn) + L-glutamate + ADP + phosphate + 2 H(+). In terms of biological role, allows the formation of correctly charged Asn-tRNA(Asn) or Gln-tRNA(Gln) through the transamidation of misacylated Asp-tRNA(Asn) or Glu-tRNA(Gln) in organisms which lack either or both of asparaginyl-tRNA or glutaminyl-tRNA synthetases. The reaction takes place in the presence of glutamine and ATP through an activated phospho-Asp-tRNA(Asn) or phospho-Glu-tRNA(Gln). The protein is Aspartyl/glutamyl-tRNA(Asn/Gln) amidotransferase subunit C of Herminiimonas arsenicoxydans.